The following is a 188-amino-acid chain: Putative manganese efflux pump MntP (188 aa).

A run of 6 helical transmembrane segments spans residues 3-23, 41-61, 62-82, 107-129, 143-163, and 168-188; these read LSATILLAFGMSMDAFAASIG, LIFGVIETLTPLVGWGLGMLA, SQFVLEWNHWIAFILLVFLGG, LLVTTAFATSLDAMAVGVGLAFL, ATFLMSTLGIMVGRFIGPLLG, and ILGGIVLIGIGSEILWSHFAG.

This sequence belongs to the MntP (TC 9.B.29) family.

The protein resides in the cell inner membrane. Probably functions as a manganese efflux pump. This Klebsiella pneumoniae (strain 342) protein is Putative manganese efflux pump MntP.